Consider the following 153-residue polypeptide: 6,7-dimethyl-8-ribityllumazine synthase (153 aa).

5-amino-6-(D-ribitylamino)uracil-binding positions include Phe-22, 56–58, and 80–82; these read AFE and TVI. 85-86 is a (2S)-2-hydroxy-3-oxobutyl phosphate binding site; that stretch reads ST. His-88 functions as the Proton donor in the catalytic mechanism. Residue Phe-113 coordinates 5-amino-6-(D-ribitylamino)uracil. Arg-127 contributes to the (2S)-2-hydroxy-3-oxobutyl phosphate binding site.

The protein belongs to the DMRL synthase family. As to quaternary structure, forms an icosahedral capsid composed of 60 subunits, arranged as a dodecamer of pentamers.

The catalysed reaction is (2S)-2-hydroxy-3-oxobutyl phosphate + 5-amino-6-(D-ribitylamino)uracil = 6,7-dimethyl-8-(1-D-ribityl)lumazine + phosphate + 2 H2O + H(+). It functions in the pathway cofactor biosynthesis; riboflavin biosynthesis; riboflavin from 2-hydroxy-3-oxobutyl phosphate and 5-amino-6-(D-ribitylamino)uracil: step 1/2. Its function is as follows. Catalyzes the formation of 6,7-dimethyl-8-ribityllumazine by condensation of 5-amino-6-(D-ribitylamino)uracil with 3,4-dihydroxy-2-butanone 4-phosphate. This is the penultimate step in the biosynthesis of riboflavin. The sequence is that of 6,7-dimethyl-8-ribityllumazine synthase from Actinobacillus pleuropneumoniae serotype 7 (strain AP76).